A 392-amino-acid chain; its full sequence is Stilbene synthase 1 (392 aa).

Residue 55-58 coordinates substrate; sequence KFNR. Cys-164 is an active-site residue. Substrate contacts are provided by residues Leu-267 and 305–307; that span reads GGP.

This sequence belongs to the thiolase-like superfamily. Chalcone/stilbene synthases family. As to quaternary structure, homodimer. In leaves, expressed in palisade and spongy parenchyma cells and, to a lesser extent, in epidermal cells after induction.

It localises to the cytoplasm. The enzyme catalyses 4-coumaroyl-CoA + 3 malonyl-CoA + 3 H(+) = trans-resveratrol + 4 CO2 + 4 CoA. Its pathway is phytoalexin biosynthesis; 3,4',5-trihydroxystilbene biosynthesis; 3,4',5-trihydroxystilbene from trans-4-coumarate: step 2/2. Mediates resistance to pathogens which are sensitive to stilbenes such as Botrytis cinerea, Eutypa lata and Plasmopora viticola by enhancing the production of phytoalexins. Confers resistance to Phytophthora palmivora when expressed in papaya. The sequence is that of Stilbene synthase 1 (VINST1) from Vitis vinifera (Grape).